Here is a 266-residue protein sequence, read N- to C-terminus: Undecaprenyl-diphosphatase (266 aa).

8 consecutive transmembrane segments (helical) span residues I2–I22, L39–Y59, L86–I106, M112–L132, I145–S165, A184–Y204, M212–I232, and L246–I266.

Belongs to the UppP family.

The protein localises to the cell inner membrane. The enzyme catalyses di-trans,octa-cis-undecaprenyl diphosphate + H2O = di-trans,octa-cis-undecaprenyl phosphate + phosphate + H(+). Its function is as follows. Catalyzes the dephosphorylation of undecaprenyl diphosphate (UPP). Confers resistance to bacitracin. This Borrelia garinii subsp. bavariensis (strain ATCC BAA-2496 / DSM 23469 / PBi) (Borreliella bavariensis) protein is Undecaprenyl-diphosphatase.